The following is a 206-amino-acid chain: Oligoribonuclease (206 aa).

Residues 20–183 (LVWLDMEMTG…ADIHESIDEL (164 aa)) enclose the Exonuclease domain. Tyr-141 is an active-site residue.

It belongs to the oligoribonuclease family.

It is found in the cytoplasm. 3'-to-5' exoribonuclease specific for small oligoribonucleotides. The protein is Oligoribonuclease of Burkholderia cenocepacia (strain HI2424).